The following is a 113-amino-acid chain: MTMFIVSWTGLPRHFLKKKGGMNLDHGILKDEYIVIEDINICVFAPDKINALLNAIQHFCNLDENEDYLLSKNIDTTLEILKKMNPTVTALNDGVVFQFKEASSIMYKGFNIE.

This is an uncharacterized protein from Acanthamoeba polyphaga mimivirus (APMV).